A 155-amino-acid polypeptide reads, in one-letter code: Ribosomal RNA large subunit methyltransferase H (155 aa).

S-adenosyl-L-methionine is bound by residues Leu72, Gly103, and 122–127; that span reads LGRMVW.

The protein belongs to the RNA methyltransferase RlmH family. As to quaternary structure, homodimer.

The protein resides in the cytoplasm. It carries out the reaction pseudouridine(1915) in 23S rRNA + S-adenosyl-L-methionine = N(3)-methylpseudouridine(1915) in 23S rRNA + S-adenosyl-L-homocysteine + H(+). Functionally, specifically methylates the pseudouridine at position 1915 (m3Psi1915) in 23S rRNA. This chain is Ribosomal RNA large subunit methyltransferase H, found in Cereibacter sphaeroides (strain KD131 / KCTC 12085) (Rhodobacter sphaeroides).